The chain runs to 124 residues: Small ribosomal subunit protein uS10 (124 aa).

It belongs to the universal ribosomal protein uS10 family.

This is Small ribosomal subunit protein uS10 (rps20) from Dictyostelium discoideum (Social amoeba).